The primary structure comprises 218 residues: Fibroblast growth factor 15 (218 aa).

Residues 1-25 (MARKWNGRAVARALVLATLWLAVSG) form the signal peptide.

Belongs to the heparin-binding growth factors family. Interacts with MALRD1. In terms of tissue distribution, expressed in the developing brain.

The protein resides in the secreted. Involved in the suppression of bile acid biosynthesis through down-regulation of CYP7A1 expression. In Mus musculus (Mouse), this protein is Fibroblast growth factor 15 (Fgf15).